A 386-amino-acid chain; its full sequence is Chaperone protein DnaJ (386 aa).

In terms of domain architecture, J spans 5-69 (DLYDVLGVKK…QKRAQYDQFG (65 aa)). The CR-type zinc-finger motif lies at 140–224 (GKETSIKYNR…CHGAGVTEER (85 aa)). Positions 153, 156, 170, 173, 196, 199, 212, and 215 each coordinate Zn(2+). 4 CXXCXGXG motif repeats span residues 153 to 160 (CHTCHGSG), 170 to 177 (CSTCHGQG), 196 to 203 (CPTCGGKG), and 212 to 219 (CDTCHGAG).

The protein belongs to the DnaJ family. In terms of assembly, homodimer. Requires Zn(2+) as cofactor.

The protein localises to the cytoplasm. Its function is as follows. Participates actively in the response to hyperosmotic and heat shock by preventing the aggregation of stress-denatured proteins and by disaggregating proteins, also in an autonomous, DnaK-independent fashion. Unfolded proteins bind initially to DnaJ; upon interaction with the DnaJ-bound protein, DnaK hydrolyzes its bound ATP, resulting in the formation of a stable complex. GrpE releases ADP from DnaK; ATP binding to DnaK triggers the release of the substrate protein, thus completing the reaction cycle. Several rounds of ATP-dependent interactions between DnaJ, DnaK and GrpE are required for fully efficient folding. Also involved, together with DnaK and GrpE, in the DNA replication of plasmids through activation of initiation proteins. This is Chaperone protein DnaJ from Limosilactobacillus fermentum (strain NBRC 3956 / LMG 18251) (Lactobacillus fermentum).